Here is a 402-residue protein sequence, read N- to C-terminus: Putative RNA-guided DNA endonuclease InsQ (402 aa).

Active-site residues include D183 and E267. Positions 334, 337, 353, and 356 each coordinate Zn(2+). The active site involves D363.

In the N-terminal section; belongs to the transposase 2 family. This sequence in the C-terminal section; belongs to the transposase 35 family.

An RNA-guided dsDNA endonuclease. When guided by an RNA derived from the right-end element of its insertion sequence element (IS), cleaves DNA downstream of the transposon-associated motif (TAM). Cleaves supercoiled and linear DNA in a staggered manner 15-21 bases from the TAM yielding 5'-overhangs. Binds reRNA, an approximately 150 nucleotide base sRNA derived from the 3' end of its own gene, the right end (RE) of the insertion sequence (IS) plus sequence downstream of the IS. Functionally, not required for transposition of the insertion element. The corresponding transposase in strains MG1655 and W3110 is a truncated pseudogene (yncK). The chain is Putative RNA-guided DNA endonuclease InsQ (insQ) from Escherichia coli (strain K12).